Consider the following 871-residue polypeptide: Serrate RNA effector molecule homolog (871 aa).

The segment at 1 to 90 is disordered; sequence MGDSDDEYDR…RRDWDGHSSD (90 aa). Glycine 2 bears the N-acetylglycine mark. Phosphoserine is present on serine 4. Tyrosine 8 carries the post-translational modification Phosphotyrosine. A compositionally biased stretch (basic and acidic residues) spans 8–73; the sequence is YDRRRRDKFR…ERFSPPRHEL (66 aa). Phosphoserine occurs at positions 67, 74, and 136. Residue lysine 150 forms a Glycyl lysine isopeptide (Lys-Gly) (interchain with G-Cter in SUMO2) linkage. The segment at 272–411 is disordered; sequence EEEEQAGKPG…KPKDAAGLEC (140 aa). The segment covering 297 to 347 has biased composition (basic and acidic residues); that stretch reads DGERKTNDKDEKKEDSKQAENDSSNDDKTKKSEGDGDKEEKKEDSEKEAKK. The segment covering 370–385 has biased composition (acidic residues); the sequence is SESESESGQAEEEKEE. The span at 386-411 shows a compositional bias: basic and acidic residues; it reads AEALKEKEKPKEEEWEKPKDAAGLEC. Serine 492 and serine 539 each carry phosphoserine. Threonine 543 carries the phosphothreonine modification. Phosphoserine is present on serine 569. The disordered stretch occupies residues 574 to 597; that stretch reads ELLGSSGGAPPEEPPKEGNPAEIN. Threonine 670 carries the phosphothreonine modification. Serine 678 carries the post-translational modification Phosphoserine. Residues arginine 828, arginine 835, and arginine 845 each carry the omega-N-methylarginine modification. The disordered stretch occupies residues 830-849; it reads NYDAFRGQGGYPGKPRNRMV.

The protein belongs to the ARS2 family. Interacts with CASP8AP2, ERBB4, NCBP1/CBP80 and DROSHA. Interacts with LUZP4. Interacts with NCBP2/CBP20 and NCBP3. Interacts with MTREX.

Its subcellular location is the nucleus. It is found in the nucleoplasm. The protein localises to the cytoplasm. Acts as a mediator between the cap-binding complex (CBC) and the primary microRNAs (miRNAs) processing machinery during cell proliferation. Contributes to the stability and delivery of capped primary miRNA transcripts to the primary miRNA processing complex containing DGCR8 and DROSHA, thereby playing a role in RNA-mediated gene silencing (RNAi) by miRNAs. Binds capped RNAs (m7GpppG-capped RNA); however interaction is probably mediated via its interaction with NCBP1/CBP80 component of the CBC complex. Involved in cell cycle progression at S phase. Does not directly confer arsenite resistance but rather modulates arsenic sensitivity. Independently of its activity on miRNAs, necessary and sufficient to promote neural stem cell self-renewal. Does so by directly binding SOX2 promoter and positively regulating its transcription. In Pongo abelii (Sumatran orangutan), this protein is Serrate RNA effector molecule homolog (SRRT).